Reading from the N-terminus, the 340-residue chain is Outer membrane protein B (340 aa).

An N-terminal signal peptide occupies residues 1–26; that stretch reads MSSKLVNYLRLTFLSFLGIASTSLDA.

Belongs to the chlamydial OMP family.

It is found in the cell outer membrane. The sequence is that of Outer membrane protein B (ompB) from Chlamydia trachomatis serovar D (strain ATCC VR-885 / DSM 19411 / UW-3/Cx).